The sequence spans 330 residues: 4-hydroxythreonine-4-phosphate dehydrogenase (330 aa).

Residue Thr-133 participates in substrate binding. The a divalent metal cation site is built by His-161, His-206, and His-261. Residues Lys-269, Asn-278, and Arg-287 each contribute to the substrate site.

It belongs to the PdxA family. Homodimer. Zn(2+) is required as a cofactor. The cofactor is Mg(2+). It depends on Co(2+) as a cofactor.

Its subcellular location is the cytoplasm. It carries out the reaction 4-(phosphooxy)-L-threonine + NAD(+) = 3-amino-2-oxopropyl phosphate + CO2 + NADH. It participates in cofactor biosynthesis; pyridoxine 5'-phosphate biosynthesis; pyridoxine 5'-phosphate from D-erythrose 4-phosphate: step 4/5. In terms of biological role, catalyzes the NAD(P)-dependent oxidation of 4-(phosphooxy)-L-threonine (HTP) into 2-amino-3-oxo-4-(phosphooxy)butyric acid which spontaneously decarboxylates to form 3-amino-2-oxopropyl phosphate (AHAP). This is 4-hydroxythreonine-4-phosphate dehydrogenase from Xylella fastidiosa (strain Temecula1 / ATCC 700964).